The following is a 107-amino-acid chain: U1-lycotoxin-Ls1t (107 aa).

Positions 1 to 20 (MMKVLVVVALLVTLISYSSS) are cleaved as a signal peptide. Residues 21 to 41 (EGIDDLEADELLSLMANEQTR) constitute a propeptide that is removed on maturation. 4 disulfide bridges follow: Cys44-Cys59, Cys51-Cys68, Cys58-Cys86, and Cys70-Cys84.

It belongs to the neurotoxin 19 (CSTX) family. 04 (U1-Lctx) subfamily. In terms of tissue distribution, expressed by the venom gland.

The protein resides in the secreted. The protein is U1-lycotoxin-Ls1t of Lycosa singoriensis (Wolf spider).